Reading from the N-terminus, the 382-residue chain is Mannitol-1-phosphate 5-dehydrogenase (382 aa).

An NAD(+)-binding site is contributed by 4–15 (AVHFGAGNIGRG).

This sequence belongs to the mannitol dehydrogenase family. In terms of assembly, monomer.

The enzyme catalyses D-mannitol 1-phosphate + NAD(+) = beta-D-fructose 6-phosphate + NADH + H(+). This Streptococcus mutans serotype c (strain ATCC 700610 / UA159) protein is Mannitol-1-phosphate 5-dehydrogenase (mtlD).